Here is an 86-residue protein sequence, read N- to C-terminus: High affinity immunoglobulin epsilon receptor subunit gamma (86 aa).

Residues 1 to 18 form the signal peptide; it reads MIPAVVLLLLLLVEQAAA. Residues 19-23 lie on the Extracellular side of the membrane; the sequence is LGEPQ. Residues 24–44 form a helical membrane-spanning segment; sequence LCYILDAILFLYGIVLTLLYC. The Cytoplasmic portion of the chain corresponds to 45–86; that stretch reads RLKLQVRKAAIDSYEKSDGVYTGLSTRNQETYETLKHEKPPQ. One can recognise an ITAM domain in the interval 54-82; sequence AIDSYEKSDGVYTGLSTRNQETYETLKHE. Y65 carries the post-translational modification Phosphotyrosine. Position 69 is a phosphoserine (S69). Residue Y76 is modified to Phosphotyrosine. At T78 the chain carries Phosphothreonine.

Belongs to the CD3Z/FCER1G family. As to quaternary structure, igE Fc receptor is a tetramer of an alpha chain, a beta chain, and two disulfide linked gamma chains. Associates with FCGR1A; forms a functional signaling complex. The signaling subunit of immunoglobulin gamma (IgG) Fc receptor complex. As a homodimer or a heterodimer of CD247 and FCER1G, associates with the ligand binding subunit FCGR3A to form a functional receptor complex. Associates with CLEC6A. Interacts with CLEC4E. Interacts (via ITAM domain) with SYK (via SH2 domains); activates SYK, enabling integrin-mediated activation of neutrophils and macrophages. Interacts with common beta chain of interleukin 3 receptor CSF2RB and recruits SYK in response to IL3 stimulation; this interaction is direct. Interacts with CD300LH; the interaction may be indirect. Interacts with CD300LD. Interacts with TARM1.

The protein resides in the cell membrane. In terms of biological role, adapter protein containing an immunoreceptor tyrosine-based activation motif (ITAM) that transduces activation signals from various immunoreceptors. As a component of the high-affinity immunoglobulin E (IgE) receptor, mediates allergic inflammatory signaling in mast cells. As a constitutive component of interleukin-3 receptor complex, selectively mediates interleukin 4/IL4 production b basophils priming T-cells toward effector T-helper 2 subset. Associates with pattern recognition receptors CLEC4D and CLEC4E to form a functional signaling complex in myeloid cells. Binding of mycobacterial trehalose 6,6'-dimycolate (TDM) to this receptor complex leads to phosphorylation of ITAM, triggering activation of SYK, CARD9 and NF-kappa-B, consequently driving maturation of antigen-presenting cells and shaping antigen-specific priming of T-cells toward effector T-helper 1 and T-helper 17 cell subtypes. May function cooperatively with other activating receptors. Functionally linked to integrin beta-2/ITGB2-mediated neutrophil activation. Also involved in integrin alpha-2/ITGA2-mediated platelet activation. The protein is High affinity immunoglobulin epsilon receptor subunit gamma (FCER1G) of Sus scrofa (Pig).